Here is a 128-residue protein sequence, read N- to C-terminus: DNA-directed RNA polymerase subunit omega (128 aa).

Positions 87–106 (ARSSQAAPKSAPGQEIGKSF) are disordered.

This sequence belongs to the RNA polymerase subunit omega family. In terms of assembly, the RNAP catalytic core consists of 2 alpha, 1 beta, 1 beta' and 1 omega subunit. When a sigma factor is associated with the core the holoenzyme is formed, which can initiate transcription.

It carries out the reaction RNA(n) + a ribonucleoside 5'-triphosphate = RNA(n+1) + diphosphate. Its function is as follows. Promotes RNA polymerase assembly. Latches the N- and C-terminal regions of the beta' subunit thereby facilitating its interaction with the beta and alpha subunits. This is DNA-directed RNA polymerase subunit omega from Anaplasma marginale (strain Florida).